The chain runs to 309 residues: Taste receptor type 2 member 43 (309 aa).

A topological domain (extracellular) is located at residue Met1. The helical transmembrane segment at Ile2 to Phe22 threads the bilayer. Topologically, residues Ala23–Gln46 are cytoplasmic. Residues Ile47–Tyr67 form a helical membrane-spanning segment. At Ser68–Asn86 the chain is on the extracellular side. A helical membrane pass occupies residues Ile87–Leu107. The Cytoplasmic segment spans residues Leu108 to Lys126. Residues Ser127 to Ile147 traverse the membrane as a helical segment. Over Asn148 to Thr178 the chain is Extracellular. 2 N-linked (GlcNAc...) asparagine glycosylation sites follow: Asn161 and Asn176. The chain crosses the membrane as a helical span at residues Val179–Ile199. At Cys200 to Gln229 the chain is on the cytoplasmic side. Residues Thr230–Trp250 form a helical membrane-spanning segment. At Ser251–Pro259 the chain is on the extracellular side. The chain crosses the membrane as a helical span at residues Val260–Ile280. The Cytoplasmic portion of the chain corresponds to Trp281 to Pro309.

This sequence belongs to the G-protein coupled receptor T2R family. As to expression, expressed in subsets of taste receptor cells of the tongue and exclusively in gustducin-positive cells. Expressed in airway epithelia.

The protein resides in the membrane. Its subcellular location is the cell projection. It is found in the cilium membrane. Its function is as follows. Gustducin-coupled receptor immplicated in the perception of bitter compounds in the oral cavity and the gastrointestinal tract. Signals through PLCB2 and the calcium-regulated cation channel TRPM5. Activated by the sulfonyl amide sweeteners saccharin and acesulfame K. In airway epithelial cells, binding of bitter compounds increases the intracellular calcium ion concentration and stimulates ciliary beat frequency. May act as chemosensory receptors in airway epithelial cells to detect and eliminate potential noxious agents from the airways. In Homo sapiens (Human), this protein is Taste receptor type 2 member 43 (TAS2R43).